Here is a 438-residue protein sequence, read N- to C-terminus: UDP-glycosyltransferase 84B2 (438 aa).

Residues S260, 314–316 (GQQ), 331–339 (HCGWNSTIE), and 353–356 (WIDQ) each bind UDP-alpha-D-glucose.

It belongs to the UDP-glycosyltransferase family.

This Arabidopsis thaliana (Mouse-ear cress) protein is UDP-glycosyltransferase 84B2 (UGT84B2).